The chain runs to 227 residues: Cytochrome c oxidase subunit 2 (227 aa).

At 1-14 (MANHSQLGFQDASS) the chain is on the mitochondrial intermembrane side. The helical transmembrane segment at 15 to 45 (PIMEELVEFHDHALMVALAICSLVLYLLTLM) threads the bilayer. At 46-58 (LTQKLSSNTVDAQ) the chain is on the mitochondrial matrix side. The helical transmembrane segment at 59–86 (EVELIWTILPAIVLVLLALPSLQILYMM) threads the bilayer. At 87 to 227 (DEIEEPDLTL…FETWSSLLSS (141 aa)) the chain is on the mitochondrial intermembrane side. Cu cation is bound by residues His160, Cys195, Glu197, Cys199, His203, and Met206. Glu197 lines the Mg(2+) pocket.

It belongs to the cytochrome c oxidase subunit 2 family. In terms of assembly, component of the cytochrome c oxidase (complex IV, CIV), a multisubunit enzyme composed of 14 subunits. The complex is composed of a catalytic core of 3 subunits MT-CO1, MT-CO2 and MT-CO3, encoded in the mitochondrial DNA, and 11 supernumerary subunits COX4I, COX5A, COX5B, COX6A, COX6B, COX6C, COX7A, COX7B, COX7C, COX8 and NDUFA4, which are encoded in the nuclear genome. The complex exists as a monomer or a dimer and forms supercomplexes (SCs) in the inner mitochondrial membrane with NADH-ubiquinone oxidoreductase (complex I, CI) and ubiquinol-cytochrome c oxidoreductase (cytochrome b-c1 complex, complex III, CIII), resulting in different assemblies (supercomplex SCI(1)III(2)IV(1) and megacomplex MCI(2)III(2)IV(2)). Found in a complex with TMEM177, COA6, COX18, COX20, SCO1 and SCO2. Interacts with TMEM177 in a COX20-dependent manner. Interacts with COX20. Interacts with COX16. Requires Cu cation as cofactor.

The protein resides in the mitochondrion inner membrane. It carries out the reaction 4 Fe(II)-[cytochrome c] + O2 + 8 H(+)(in) = 4 Fe(III)-[cytochrome c] + 2 H2O + 4 H(+)(out). In terms of biological role, component of the cytochrome c oxidase, the last enzyme in the mitochondrial electron transport chain which drives oxidative phosphorylation. The respiratory chain contains 3 multisubunit complexes succinate dehydrogenase (complex II, CII), ubiquinol-cytochrome c oxidoreductase (cytochrome b-c1 complex, complex III, CIII) and cytochrome c oxidase (complex IV, CIV), that cooperate to transfer electrons derived from NADH and succinate to molecular oxygen, creating an electrochemical gradient over the inner membrane that drives transmembrane transport and the ATP synthase. Cytochrome c oxidase is the component of the respiratory chain that catalyzes the reduction of oxygen to water. Electrons originating from reduced cytochrome c in the intermembrane space (IMS) are transferred via the dinuclear copper A center (CU(A)) of subunit 2 and heme A of subunit 1 to the active site in subunit 1, a binuclear center (BNC) formed by heme A3 and copper B (CU(B)). The BNC reduces molecular oxygen to 2 water molecules using 4 electrons from cytochrome c in the IMS and 4 protons from the mitochondrial matrix. The polypeptide is Cytochrome c oxidase subunit 2 (MT-CO2) (Coturnix japonica (Japanese quail)).